Consider the following 334-residue polypeptide: Porphobilinogen deaminase (334 aa).

C255 carries the S-(dipyrrolylmethanemethyl)cysteine modification.

It belongs to the HMBS family. Monomer. Dipyrromethane is required as a cofactor.

The enzyme catalyses 4 porphobilinogen + H2O = hydroxymethylbilane + 4 NH4(+). The protein operates within porphyrin-containing compound metabolism; protoporphyrin-IX biosynthesis; coproporphyrinogen-III from 5-aminolevulinate: step 2/4. Its function is as follows. Tetrapolymerization of the monopyrrole PBG into the hydroxymethylbilane pre-uroporphyrinogen in several discrete steps. The protein is Porphobilinogen deaminase of Burkholderia orbicola (strain MC0-3).